The sequence spans 823 residues: Nuclear factor I family protein (823 aa).

A disordered region spans residues 1–56; that stretch reads MEPHLKIDVSSASGSTTTGATASTSEAPQDSQAQQTMPPPSSDWSNQFNSPEAVSP. The segment covering 10–25 has biased composition (low complexity); the sequence is SSASGSTTTGATASTS. Polar residues predominate over residues 26-52; the sequence is EAPQDSQAQQTMPPPSSDWSNQFNSPE. Positions 61-253 form a DNA-binding region, CTF/NF-I; sequence IKCFSPYSQE…DVDTKITLTY (193 aa). 3 disordered regions span residues 364-408, 433-468, and 777-823; these read PYPI…NDEV, SRTQQNQGAPGTSRQVRPLPDFQSQDSARSPGAFRS, and APPA…NEKK. Positions 386 to 396 are enriched in basic and acidic residues; the sequence is PSEKRSRDISS. Residues 433–447 are compositionally biased toward polar residues; the sequence is SRTQQNQGAPGTSRQ. Positions 777–794 are enriched in low complexity; the sequence is APPACSPSSSNSSLGAAN.

This sequence belongs to the CTF/NF-I family. In terms of tissue distribution, expressed in muscles, neurons and intestinal cells.

Its subcellular location is the nucleus. Probable transcription factor which recognizes and binds the palindromic sequence 5'-TTGGCANNNTGCCAA-3' present in promoters. Plays a role in locomotion, pharyngeal pumping, egg-laying, and life span. The protein is Nuclear factor I family protein of Caenorhabditis elegans.